The sequence spans 556 residues: Potassium-transporting ATPase potassium-binding subunit (556 aa).

Helical transmembrane passes span 5–25, 65–85, 133–153, 176–196, 249–269, 283–303, 377–397, 415–435, 483–503, and 526–546; these read LAGILFLASLVIALVAVHVPL, SVLAFSAVSLLFLFILQLVQG, GLAVQNFVSAAVGMAVAIALV, IRILLPISVIAAILLITGGAI, PTTWTNWIEIFLLLVIAFSLP, YAIVGVQAVLAVISWSATLFF, AGLYGILILAVITVFVAGLMV, LAATYFLVTPLIVLTGTAVAM, ALGLAMVFGRFLPIILALALA, and FVGMVAGVTLILVALTFLPML.

This sequence belongs to the KdpA family. The system is composed of three essential subunits: KdpA, KdpB and KdpC.

Its subcellular location is the cell membrane. Functionally, part of the high-affinity ATP-driven potassium transport (or Kdp) system, which catalyzes the hydrolysis of ATP coupled with the electrogenic transport of potassium into the cytoplasm. This subunit binds the extracellular potassium ions and delivers the ions to the membrane domain of KdpB through an intramembrane tunnel. The protein is Potassium-transporting ATPase potassium-binding subunit of Mycolicibacterium vanbaalenii (strain DSM 7251 / JCM 13017 / BCRC 16820 / KCTC 9966 / NRRL B-24157 / PYR-1) (Mycobacterium vanbaalenii).